We begin with the raw amino-acid sequence, 361 residues long: GDP-mannose 4,6 dehydratase 1 (361 aa).

NADP(+)-binding positions include 23–28 (GITGQD), 79–80 (DL), 101–105 (LAAQS), and tyrosine 116. Residue serine 150 is part of the active site. Active-site nucleophile residues include glutamate 152 and tyrosine 173. Positions 177, 203, and 208 each coordinate NADP(+).

It belongs to the NAD(P)-dependent epimerase/dehydratase family. GDP-mannose 4,6-dehydratase subfamily. In terms of assembly, homotetramer. The cofactor is NADP(+). Expressed in roots,stipules and pollen just before anthesis. Primarily localized to the root meristem and columella root cap. Not expressed in emerging lateral roots.

It catalyses the reaction GDP-alpha-D-mannose = GDP-4-dehydro-alpha-D-rhamnose + H2O. Its pathway is nucleotide-sugar biosynthesis; GDP-L-fucose biosynthesis via de novo pathway; GDP-L-fucose from GDP-alpha-D-mannose: step 1/2. Catalyzes the conversion of GDP-D-mannose to GDP-4-dehydro-6-deoxy-D-mannose. This chain is GDP-mannose 4,6 dehydratase 1 (GMD1), found in Arabidopsis thaliana (Mouse-ear cress).